The chain runs to 275 residues: MYNVIGVRFKKAGKIYYFDPNGFHIEHDSCVIVETVRGVEYGQVVIANKQVDEHDVVLPLRKVIRVADDRDLLIVEENKQEALSAFDICQKKVIEHGLDMKLVDVEFTFDRNKVIFYFTADGRVDFRELVKDLASIFKTRIELRQIGVRDEAKMLGGIGPCGRMLCCSTFLGDFEPVSIKMAKDQNLSLNPTKISGLCGRLMCCLKYENDEYETAKEQLPDIGEMITTANGPAKVVGLNILERVLQVELINREKVIEYTWEELLEEGVVSAQTTD.

One can recognise a PSP1 C-terminal domain in the interval 61 to 146; that stretch reads RKVIRVADDR…FKTRIELRQI (86 aa).

It localises to the cytoplasm. In terms of biological role, essential for the phosphorelay during initiation of sporulation. May control the level of phosphorylated spo0A through spo0E activity during sporulation. The protein is Stage 0 sporulation protein YaaT (yaaT) of Bacillus subtilis (strain 168).